The sequence spans 80 residues: Conotoxin Vi6.2 (80 aa).

The signal sequence occupies residues 1–22 (MKLTCVLITTVLFLTASQLITA). Residues 23–47 (DYSRDKRQYRAVRLRDEMRNFKGAR) constitute a propeptide that is removed on maturation. Cystine bridges form between cysteine 49–cysteine 62, cysteine 56–cysteine 67, and cysteine 61–cysteine 77. 4-hydroxyproline is present on residues proline 60 and proline 63.

This sequence belongs to the conotoxin O1 superfamily. In terms of tissue distribution, expressed by the venom duct.

It localises to the secreted. Ion channel inhibitor that inhibits the increase in intracellular calcium upon depolarization in DRG neurons. In vivo, both intraperitoneal and intracranial injections into mice induce hyperactivity. The polypeptide is Conotoxin Vi6.2 (Conus virgo (Virgin cone)).